The chain runs to 74 residues: Toxin Td6 (74 aa).

The signal sequence occupies residues isoleucine 1–glutamate 8. Residues lysine 9–glycine 71 form the LCN-type CS-alpha/beta domain. 4 disulfides stabilise this stretch: cysteine 19-cysteine 70, cysteine 23-cysteine 45, cysteine 31-cysteine 51, and cysteine 35-cysteine 53. Residue arginine 72 is modified to Arginine amide.

This sequence belongs to the long (4 C-C) scorpion toxin superfamily. Sodium channel inhibitor family. Beta subfamily. Expressed by the venom gland.

The protein resides in the secreted. Beta toxins bind voltage-independently at site-4 of sodium channels (Nav) and shift the voltage of activation toward more negative potentials thereby affecting sodium channel activation and promoting spontaneous and repetitive firing. The protein is Toxin Td6 of Tityus discrepans (Venezuelan scorpion).